The following is a 179-amino-acid chain: MSRIGKLPIEIPKGVKISYIDSNLMVEGPKGSLGRRIMSGVSIDLTDNTITVSRDNDGIKSRSAHGLTRTLINNMVTGVTTGFETALEINGVGYRAELKGDVLNLSLGYSHPINFQLPKGINVEVDKMTKLLVKGIDKELVGQTAAKIRAFRGPEPYKGKGVKYANETILRKAGKTGKK.

It belongs to the universal ribosomal protein uL6 family. As to quaternary structure, part of the 50S ribosomal subunit.

This protein binds to the 23S rRNA, and is important in its secondary structure. It is located near the subunit interface in the base of the L7/L12 stalk, and near the tRNA binding site of the peptidyltransferase center. This is Large ribosomal subunit protein uL6 from Geotalea uraniireducens (strain Rf4) (Geobacter uraniireducens).